The chain runs to 285 residues: MVAKILDGKQISKDYRQGLQEQVEALKEKGYTPKLSVILVGNDGASQSYVNSKKKAAEKIGMISEIVHLDEDTSEEDVLKELDRLNNDDSVSGILVQVPLPKQVSEQKILEAINPEKDVDGFHPSNIGKLYIDEQTFVPCTPLGIMEILKHADIDLEGKNAVVIGRSHIVGQPVSKLLLQANATVTILHSRTKDMHSHLKDADVIVSAVGQPGLVTKDDVKEGAVIVDVGNTPDENGKLKGDVEFEEVKEVAGAITPVPGGVGPLTITMVLNNTLLAEKMRRGIE.

NADP(+)-binding positions include 165–167 (GRS) and S190.

This sequence belongs to the tetrahydrofolate dehydrogenase/cyclohydrolase family. Homodimer.

The enzyme catalyses (6R)-5,10-methylene-5,6,7,8-tetrahydrofolate + NADP(+) = (6R)-5,10-methenyltetrahydrofolate + NADPH. It carries out the reaction (6R)-5,10-methenyltetrahydrofolate + H2O = (6R)-10-formyltetrahydrofolate + H(+). Its pathway is one-carbon metabolism; tetrahydrofolate interconversion. Its function is as follows. Catalyzes the oxidation of 5,10-methylenetetrahydrofolate to 5,10-methenyltetrahydrofolate and then the hydrolysis of 5,10-methenyltetrahydrofolate to 10-formyltetrahydrofolate. This Staphylococcus haemolyticus (strain JCSC1435) protein is Bifunctional protein FolD.